Here is a 398-residue protein sequence, read N- to C-terminus: uncharacterized protein (398 aa).

The CobW C-terminal domain maps to 235-351 (VAIVEFSARR…DIVNALNAAL (117 aa)).

This is an uncharacterized protein from Mycobacterium bovis (strain ATCC BAA-935 / AF2122/97).